Consider the following 233-residue polypeptide: Orotidine 5'-phosphate decarboxylase (233 aa).

Residues aspartate 11, lysine 34, 61–70, threonine 117, arginine 179, glutamine 189, glycine 209, and arginine 210 each bind substrate; that span reads DLKLHDIPNT. Lysine 63 serves as the catalytic Proton donor.

This sequence belongs to the OMP decarboxylase family. Type 1 subfamily. As to quaternary structure, homodimer.

The enzyme catalyses orotidine 5'-phosphate + H(+) = UMP + CO2. It functions in the pathway pyrimidine metabolism; UMP biosynthesis via de novo pathway; UMP from orotate: step 2/2. Catalyzes the decarboxylation of orotidine 5'-monophosphate (OMP) to uridine 5'-monophosphate (UMP). This is Orotidine 5'-phosphate decarboxylase from Streptococcus agalactiae serotype Ia (strain ATCC 27591 / A909 / CDC SS700).